The primary structure comprises 347 residues: NADH-ubiquinone oxidoreductase chain 2 (347 aa).

The next 11 membrane-spanning stretches (helical) occupy residues 1 to 21 (MNPAIFTTIILTMILGTMIVT), 25 to 45 (HWLTVWIGFEMNMLAIIPILM), 59 to 79 (YFLTQATASMLLMLAITINLV), 96 to 116 (ITMTLAMAMKLGLSPFHFWVP), 127 to 147 (GLILLTWQKLAPMSILYQISP), 149 to 169 (INLELLLMMAILSIAIGGWGG), 178 to 198 (IMAYSSIAHMGWMTAIMAYNP), 201 to 221 (TLLNLXVYILLTTTXFMMLML), 240 to 260 (LATTILLIMLSLGGLPPLSGF), 274 to 294 (DSIIMPTIMAMAALLNLYFYM), and 326 to 346 (ISPLIILSTLXLPLSPMLTLL).

Belongs to the complex I subunit 2 family. Core subunit of respiratory chain NADH dehydrogenase (Complex I) which is composed of 45 different subunits. Interacts with TMEM242.

It is found in the mitochondrion inner membrane. It catalyses the reaction a ubiquinone + NADH + 5 H(+)(in) = a ubiquinol + NAD(+) + 4 H(+)(out). Functionally, core subunit of the mitochondrial membrane respiratory chain NADH dehydrogenase (Complex I) which catalyzes electron transfer from NADH through the respiratory chain, using ubiquinone as an electron acceptor. Essential for the catalytic activity and assembly of complex I. In Dobsonia minor (Lesser bare-backed fruit bat), this protein is NADH-ubiquinone oxidoreductase chain 2.